Consider the following 43-residue polypeptide: Protein PsbN (43 aa).

A helical transmembrane segment spans residues 7–29 (IVIFVSSLLLGITTYSVYTAFGP).

This sequence belongs to the PsbN family.

It localises to the plastid. The protein localises to the chloroplast thylakoid membrane. May play a role in photosystem I and II biogenesis. The chain is Protein PsbN from Phaeodactylum tricornutum (strain CCAP 1055/1).